The primary structure comprises 701 residues: Polyribonucleotide nucleotidyltransferase (701 aa).

Residues aspartate 485 and aspartate 491 each contribute to the Mg(2+) site. Positions 552 to 611 constitute a KH domain; it reads PRITTLKINPEKIRDVIGKGGATIRALTEETGTTIELEDDGTVKIASSNGEATKEAIRRI. The 69-residue stretch at 621-689 folds into the S1 motif domain; sequence GTVYNGKVVR…RQGRVRLSMK (69 aa).

Belongs to the polyribonucleotide nucleotidyltransferase family. As to quaternary structure, component of the RNA degradosome, which is a multiprotein complex involved in RNA processing and mRNA degradation. Mg(2+) is required as a cofactor.

Its subcellular location is the cytoplasm. It catalyses the reaction RNA(n+1) + phosphate = RNA(n) + a ribonucleoside 5'-diphosphate. Involved in mRNA degradation. Catalyzes the phosphorolysis of single-stranded polyribonucleotides processively in the 3'- to 5'-direction. This is Polyribonucleotide nucleotidyltransferase from Shewanella piezotolerans (strain WP3 / JCM 13877).